A 361-amino-acid chain; its full sequence is MGEPEPEQIRLKCVRKEGFFTVPPEHRLGRCRSVKEFEKLNRIGEGTYGIVYRARDTHTDEIVALKKVRMDKEKDGVPISSLREITLLLRLRHPNIVELKEVVVGNHLESIFLVMGYCEQDLASLLENMPTPFSEAQVKCIVLQVLRGLQYLHRNFIIHRDLKVSNLLMTDKGCVKTADFGLARAYGIPVKPMTPKVVTLWYRAPELLLGTTTQTTSIDMWAVGCILAELLAHKPLLPGTSEIHQVDLIVQLLGTPSENIWPGFSQLPLASQYSLRKQPYNNLKHKFPWLSEAGLRLMNLLFMYDPKKRATAGDCLESSYFKEKPLPCEPELMPTFPHHRNKRATPATSLGTESQSRRGRP.

The 285-residue stretch at 37–321 folds into the Protein kinase domain; it reads FEKLNRIGEG…AGDCLESSYF (285 aa). ATP is bound by residues 43 to 51 and Lys66; that span reads IGEGTYGIV. Residue Asp161 is the Proton acceptor of the active site. Thr194 is modified (phosphothreonine). Residues 332–361 form a disordered region; that stretch reads LMPTFPHHRNKRATPATSLGTESQSRRGRP.

Belongs to the protein kinase superfamily. CMGC Ser/Thr protein kinase family. CDC2/CDKX subfamily. Heterodimer with CCNQ, the interaction is required for kinase activity. Interacts with ETS2. Interacts with PRK2.

Its subcellular location is the cytoplasm. The protein localises to the cytoskeleton. It localises to the cilium basal body. It catalyses the reaction L-seryl-[protein] + ATP = O-phospho-L-seryl-[protein] + ADP + H(+). The enzyme catalyses L-threonyl-[protein] + ATP = O-phospho-L-threonyl-[protein] + ADP + H(+). Its function is as follows. Cyclin-dependent kinase that phosphorylates the transcription factor ETS2 (in vitro) and positively controls its proteasomal degradation (in cells). Involved in the regulation of actin cytoskeleton organization through the phosphorylation of actin dynamics regulators such as PKN2. Is a negative regulator of ciliogenesis through phosphorylation of PKN2 and promotion of RhoA signaling. The sequence is that of Cyclin-dependent kinase 10 (CDK10) from Bos taurus (Bovine).